Here is a 384-residue protein sequence, read N- to C-terminus: Galactokinase (384 aa).

Residue 35 to 38 (EHTD) coordinates substrate. Residues serine 69 and 125–131 (GAGLSSS) contribute to the ATP site. Positions 131 and 163 each coordinate Mg(2+). The active-site Proton acceptor is aspartate 175. Position 224 (tyrosine 224) interacts with substrate.

This sequence belongs to the GHMP kinase family. GalK subfamily.

The protein resides in the cytoplasm. It catalyses the reaction alpha-D-galactose + ATP = alpha-D-galactose 1-phosphate + ADP + H(+). Its pathway is carbohydrate metabolism; galactose metabolism. In terms of biological role, catalyzes the transfer of the gamma-phosphate of ATP to D-galactose to form alpha-D-galactose-1-phosphate (Gal-1-P). In Aliivibrio fischeri (strain ATCC 700601 / ES114) (Vibrio fischeri), this protein is Galactokinase.